A 475-amino-acid polypeptide reads, in one-letter code: Zinc finger protein 296 (475 aa).

Residues 1–78 (MSRRKAGSAP…SPGPMPAGAA (78 aa)) are disordered. A Glycyl lysine isopeptide (Lys-Gly) (interchain with G-Cter in SUMO2) cross-link involves residue K35. 3 consecutive C2H2-type zinc fingers follow at residues 157 to 180 (LSCLRCGKQFTVAWKLLRHAQWDH), 231 to 253 (PTCPVCKKTLSSFSNLKVHMRSH), and 259 to 281 (YACDQCPYACAQSSKLNRHKKTH). Residues 275 to 385 (NRHKKTHRQV…KSGGKSRGPG (111 aa)) form a disordered region. 2 stretches are compositionally biased toward low complexity: residues 295–313 (SQEQASAAPPEPAVHAAAP) and 326–338 (GAAATAGVQEPGA). Residues 339 to 351 (PGSGAQAGPGGDT) are compositionally biased toward gly residues. Positions 354-367 (AITTEQRTDPANSQ) are enriched in polar residues. 3 consecutive C2H2-type zinc fingers follow at residues 386 to 408 (GSCEFCGKHFTNSSNLTVHRRSH), 414 to 436 (YTCEFCNYACAQSSKLNRHRRMH), and 445 to 468 (FECPHCHVPFGLRATLDKHLRQKH).

Belongs to the krueppel C2H2-type zinc-finger protein family. Interacts with KLF4.

The protein localises to the nucleus. Functionally, may be a transcriptional corepressor with KLF4. The polypeptide is Zinc finger protein 296 (ZNF296) (Homo sapiens (Human)).